Reading from the N-terminus, the 239-residue chain is Pyridoxine 5'-phosphate synthase (239 aa).

3-amino-2-oxopropyl phosphate is bound at residue Asn7. 9–10 contacts 1-deoxy-D-xylulose 5-phosphate; that stretch reads DH. Arg18 contacts 3-amino-2-oxopropyl phosphate. The active-site Proton acceptor is His43. Positions 45 and 50 each coordinate 1-deoxy-D-xylulose 5-phosphate. The active-site Proton acceptor is the Glu70. Residue Thr100 coordinates 1-deoxy-D-xylulose 5-phosphate. His192 functions as the Proton donor in the catalytic mechanism. Residues Gly193 and 214–215 contribute to the 3-amino-2-oxopropyl phosphate site; that span reads GH.

This sequence belongs to the PNP synthase family. As to quaternary structure, homooctamer; tetramer of dimers.

The protein resides in the cytoplasm. It catalyses the reaction 3-amino-2-oxopropyl phosphate + 1-deoxy-D-xylulose 5-phosphate = pyridoxine 5'-phosphate + phosphate + 2 H2O + H(+). It participates in cofactor biosynthesis; pyridoxine 5'-phosphate biosynthesis; pyridoxine 5'-phosphate from D-erythrose 4-phosphate: step 5/5. In terms of biological role, catalyzes the complicated ring closure reaction between the two acyclic compounds 1-deoxy-D-xylulose-5-phosphate (DXP) and 3-amino-2-oxopropyl phosphate (1-amino-acetone-3-phosphate or AAP) to form pyridoxine 5'-phosphate (PNP) and inorganic phosphate. The polypeptide is Pyridoxine 5'-phosphate synthase (Pelagibacter ubique (strain HTCC1062)).